The following is a 332-amino-acid chain: MSVQTSSNRPLPQANLHIATETPEADSRIRSAPRPGQDPYPTRLSEPLDLPWLNRREPVVKGEEADGPLSAAQLDTFERQGFIFEPDFLKGEELEALRHELNALLARDDFRGRDFAITEPQGNEIRSLFAVHYLSRVFSRLANDERLMGRARQILGGEPYVHQSRINYKPGFEGKGFNWHSDFETWHAEDGMPAMHAVSASIVLTDNHTFNGPLMLVPGSHRVFVPCLGETPEDHHRQSLKTQEFGVPSRQALRELIDRHGIEAPTGAAGGLLLFDCNTLHGSNANMSPDPRSNAFFVYNRRDNRCVEPYAASKRRPRFLAHEPDEAWSPDG.

A compositionally biased stretch (polar residues) spans 1-10 (MSVQTSSNRP). A disordered region spans residues 1 to 47 (MSVQTSSNRPLPQANLHIATETPEADSRIRSAPRPGQDPYPTRLSEP). Glutamine 163 lines the L-ectoine pocket. 2-oxoglutarate is bound at residue lysine 169. Fe cation is bound by residues histidine 180, aspartate 182, and histidine 281.

This sequence belongs to the PhyH family. EctD subfamily. Homodimer. Fe(2+) serves as cofactor.

It carries out the reaction L-ectoine + 2-oxoglutarate + O2 = 5-hydroxyectoine + succinate + CO2. Its function is as follows. Involved in the biosynthesis of 5-hydroxyectoine, called compatible solute, which helps organisms to survive extreme osmotic stress by acting as a highly soluble organic osmolyte. Catalyzes the 2-oxoglutarate-dependent selective hydroxylation of L-ectoine to yield (4S,5S)-5-hydroxyectoine. The polypeptide is Ectoine dioxygenase (Halomonas elongata (strain ATCC 33173 / DSM 2581 / NBRC 15536 / NCIMB 2198 / 1H9)).